The primary structure comprises 129 residues: Large ribosomal subunit protein eL32 (129 aa).

This sequence belongs to the eukaryotic ribosomal protein eL32 family.

The protein is Large ribosomal subunit protein eL32 (rpl32e) of Methanosarcina acetivorans (strain ATCC 35395 / DSM 2834 / JCM 12185 / C2A).